Reading from the N-terminus, the 881-residue chain is Glutamate--tRNA ligase (881 aa).

Residues methionine 1 to glutamine 480 form a glutamyl-tRNA synthetase region. Positions proline 9–threonine 19 match the 'HIGH' region motif. Positions lysine 248 to arginine 252 match the 'KMSKS' region motif. Lysine 251 contributes to the ATP binding site. A unknown region spans residues glutamate 481 to serine 881. The segment covering glutamate 488–glycine 502 has biased composition (basic and acidic residues). The segment at glutamate 488–glutamate 747 is disordered. The segment covering glutamine 522–threonine 548 has biased composition (low complexity). The span at glutamate 549–isoleucine 562 shows a compositional bias: polar residues. Over residues threonine 563–threonine 576 the composition is skewed to low complexity. A compositionally biased stretch (polar residues) spans glutamate 577–isoleucine 590. Low complexity predominate over residues threonine 591–threonine 604. The segment covering glutamate 605–isoleucine 618 has biased composition (polar residues). Residues threonine 619–threonine 632 are compositionally biased toward low complexity. Over residues glutamate 633–isoleucine 646 the composition is skewed to polar residues. Residues threonine 647–threonine 660 show a composition bias toward low complexity. Positions glutamate 661–isoleucine 674 are enriched in polar residues. A compositionally biased stretch (low complexity) spans threonine 675–threonine 688. Polar residues predominate over residues glutamate 689–isoleucine 702. The segment covering threonine 703–serine 720 has biased composition (low complexity). A compositionally biased stretch (polar residues) spans valine 721–isoleucine 730. The span at threonine 731–aspartate 742 shows a compositional bias: low complexity. Helical transmembrane passes span leucine 809–alanine 829 and glycine 832–valine 852.

This sequence belongs to the class-I aminoacyl-tRNA synthetase family. Glutamate--tRNA ligase type 1 subfamily. As to quaternary structure, monomer.

The protein resides in the cytoplasm. Its subcellular location is the cell membrane. It catalyses the reaction tRNA(Glu) + L-glutamate + ATP = L-glutamyl-tRNA(Glu) + AMP + diphosphate. In terms of biological role, catalyzes the attachment of glutamate to tRNA(Glu) in a two-step reaction: glutamate is first activated by ATP to form Glu-AMP and then transferred to the acceptor end of tRNA(Glu). This Trichodesmium erythraeum (strain IMS101) protein is Glutamate--tRNA ligase (gltX).